The primary structure comprises 258 residues: Synaptosomal-associated protein 29 (258 aa).

The segment at 1 to 43 (MSAYPRSYNPFDEDAEDEDARPAPWSDSRDLADGPGAPADRQQ) is disordered. Residues S65, S77, and S114 each carry the phosphoserine modification. The stretch at 76 to 107 (VSAEELVRQRGALERTEKMVDKMEQDLKTSQK) forms a coiled coil. Disordered regions lie at residues 127–147 (PAET…GRLK) and 161–188 (QASH…SSEA). Residues T130 and T137 each carry the phosphothreonine modification. Over residues 131–142 (PSAQNGTLTPQP) the composition is skewed to polar residues. S163, S182, S185, S204, and S210 each carry phosphoserine. A t-SNARE coiled-coil homology domain is found at 196–258 (RACHQRIDSN…TSTERKVRQL (63 aa)).

It belongs to the SNAP-25 family. In terms of assembly, forms a SNARE complex, composed of VAMP8, SNAP29 and STX17, involved in fusion of autophagosome with lysosome. Interacts with multiple syntaxins including STX6. Interacts with EIPR1. Interacts with STX17; this interaction is increased in the absence of TMEM39A.

Its subcellular location is the cytoplasm. It is found in the golgi apparatus membrane. The protein localises to the cytoplasmic vesicle. It localises to the autophagosome membrane. The protein resides in the cell projection. Its subcellular location is the cilium membrane. Functionally, SNAREs, soluble N-ethylmaleimide-sensitive factor-attachment protein receptors, are essential proteins for fusion of cellular membranes. SNAREs localized on opposing membranes assemble to form a trans-SNARE complex, an extended, parallel four alpha-helical bundle that drives membrane fusion. SNAP29 is a SNARE involved in autophagy through the direct control of autophagosome membrane fusion with the lysososome membrane. Also plays a role in ciliogenesis by regulating membrane fusions. In Bos taurus (Bovine), this protein is Synaptosomal-associated protein 29.